The primary structure comprises 298 residues: Inosose dehydratase (298 aa).

It belongs to the IolE/MocC family. The cofactor is glutathione. Co(2+) serves as cofactor. Requires Mn(2+) as cofactor.

The enzyme catalyses scyllo-inosose = 3D-3,5/4-trihydroxycyclohexane-1,2-dione + H2O. Its function is as follows. Catalyzes the dehydration of inosose (2-keto-myo-inositol, 2KMI or 2,4,6/3,5-pentahydroxycyclohexanone) to 3D-(3,5/4)-trihydroxycyclohexane-1,2-dione (D-2,3-diketo-4-deoxy-epi-inositol). The protein is Inosose dehydratase of Serratia proteamaculans (strain 568).